Reading from the N-terminus, the 74-residue chain is Exodeoxyribonuclease 7 small subunit (74 aa).

The protein belongs to the XseB family. Heterooligomer composed of large and small subunits.

Its subcellular location is the cytoplasm. It carries out the reaction Exonucleolytic cleavage in either 5'- to 3'- or 3'- to 5'-direction to yield nucleoside 5'-phosphates.. Bidirectionally degrades single-stranded DNA into large acid-insoluble oligonucleotides, which are then degraded further into small acid-soluble oligonucleotides. In Clostridium beijerinckii (strain ATCC 51743 / NCIMB 8052) (Clostridium acetobutylicum), this protein is Exodeoxyribonuclease 7 small subunit.